Here is a 309-residue protein sequence, read N- to C-terminus: CDK-activating kinase assembly factor MAT1 (309 aa).

N-acetylmethionine is present on Met-1. An RING-type zinc finger spans residues 6–50; the sequence is CPRCKTTKYRNPSLKLMVNVCGHTLCESCVDLLFVRGAGNCPECG. Thr-51 is modified (phosphothreonine). A UIM domain is found at 142 to 161; sequence REQEELEEALEVERQEHEQR. Ser-279 carries the post-translational modification Phosphoserine.

In terms of assembly, associates primarily with CDK7 and cyclin H to form the CAK complex. CAK can further associate with the core-TFIIH to form the TFIIH basal transcription factor.

It is found in the nucleus. In terms of biological role, stabilizes the cyclin H-CDK7 complex to form a functional CDK-activating kinase (CAK) enzymatic complex. CAK activates the cyclin-associated kinases CDK1, CDK2, CDK4 and CDK6 by threonine phosphorylation. CAK complexed to the core-TFIIH basal transcription factor activates RNA polymerase II by serine phosphorylation of the repetitive C-terminal domain (CTD) of its large subunit (POLR2A), allowing its escape from the promoter and elongation of the transcripts. Involved in cell cycle control and in RNA transcription by RNA polymerase II. The sequence is that of CDK-activating kinase assembly factor MAT1 (Mnat1) from Mus musculus (Mouse).